Reading from the N-terminus, the 207-residue chain is Uracil phosphoribosyltransferase (207 aa).

Residues R77, R102, and 129-137 each bind 5-phospho-alpha-D-ribose 1-diphosphate; that span reads DPMLATGGS. Uracil contacts are provided by residues I192 and 197 to 199; that span reads GDA. D198 is a 5-phospho-alpha-D-ribose 1-diphosphate binding site.

Belongs to the UPRTase family. Mg(2+) serves as cofactor.

The catalysed reaction is UMP + diphosphate = 5-phospho-alpha-D-ribose 1-diphosphate + uracil. It functions in the pathway pyrimidine metabolism; UMP biosynthesis via salvage pathway; UMP from uracil: step 1/1. Its activity is regulated as follows. Allosterically activated by GTP. Its function is as follows. Catalyzes the conversion of uracil and 5-phospho-alpha-D-ribose 1-diphosphate (PRPP) to UMP and diphosphate. The protein is Uracil phosphoribosyltransferase of Dictyoglomus turgidum (strain DSM 6724 / Z-1310).